The primary structure comprises 487 residues: Serine carboxypeptidase-like 37 (487 aa).

Positions 1–28 (MVKQQDWSVTTCVLLFLFLASQIHCRSG) are cleaved as a signal peptide. Asparagine 105 is a glycosylation site (N-linked (GlcNAc...) asparagine). Cystine bridges form between cysteine 120–cysteine 368, cysteine 280–cysteine 291, and cysteine 315–cysteine 336. Residue serine 215 is part of the active site. Residues asparagine 317, asparagine 357, and asparagine 375 are each glycosylated (N-linked (GlcNAc...) asparagine). Aspartate 407 is a catalytic residue. N-linked (GlcNAc...) asparagine glycosylation is found at asparagine 423 and asparagine 449. Histidine 460 is an active-site residue.

Belongs to the peptidase S10 family. In terms of tissue distribution, expressed in seedlings, roots, leaves, stems, flowers and siliques.

It localises to the secreted. Its function is as follows. Probable carboxypeptidase. This is Serine carboxypeptidase-like 37 (SCPL37) from Arabidopsis thaliana (Mouse-ear cress).